The primary structure comprises 156 residues: Small ribosomal subunit protein uS7 (156 aa).

The protein belongs to the universal ribosomal protein uS7 family. In terms of assembly, part of the 30S ribosomal subunit. Contacts proteins S9 and S11.

One of the primary rRNA binding proteins, it binds directly to 16S rRNA where it nucleates assembly of the head domain of the 30S subunit. Is located at the subunit interface close to the decoding center, probably blocks exit of the E-site tRNA. In Trichormus variabilis (strain ATCC 29413 / PCC 7937) (Anabaena variabilis), this protein is Small ribosomal subunit protein uS7.